A 787-amino-acid polypeptide reads, in one-letter code: Aminodeoxychorismate synthase (787 aa).

The 218-residue stretch at 16–233 (HVLFIDSYDS…LKLSFINNVK (218 aa)) folds into the Glutamine amidotransferase type-1 domain. Catalysis depends on residues cysteine 112, histidine 207, and glutamate 209. The tract at residues 304–787 (MSSSVISENT…KLESNLQIFM (484 aa)) is PABB component.

This sequence in the C-terminal section; belongs to the anthranilate synthase component I family.

It is found in the cytoplasm. The enzyme catalyses chorismate + L-glutamine = 4-amino-4-deoxychorismate + L-glutamate. Its pathway is cofactor biosynthesis; tetrahydrofolate biosynthesis; 4-aminobenzoate from chorismate: step 1/2. Catalyzes the biosynthesis of 4-amino-4-deoxychorismate (ADC) from chorismate and glutamine. Required for the synthesis of 4-aminobenzoate (PABA), an important component in tetrahydrofolate biosynthesis. This chain is Aminodeoxychorismate synthase (ABZ1), found in Saccharomyces cerevisiae (strain ATCC 204508 / S288c) (Baker's yeast).